Reading from the N-terminus, the 34-residue chain is Photosystem II reaction center protein T (34 aa).

Residues 3-23 form a helical membrane-spanning segment; the sequence is ALVYTFLLVSTLGIIFFAIFF.

It belongs to the PsbT family. In terms of assembly, PSII is composed of 1 copy each of membrane proteins PsbA, PsbB, PsbC, PsbD, PsbE, PsbF, PsbH, PsbI, PsbJ, PsbK, PsbL, PsbM, PsbT, PsbY, PsbZ, Psb30/Ycf12, at least 3 peripheral proteins of the oxygen-evolving complex and a large number of cofactors. It forms dimeric complexes.

The protein localises to the plastid. It localises to the chloroplast thylakoid membrane. Found at the monomer-monomer interface of the photosystem II (PS II) dimer, plays a role in assembly and dimerization of PSII. PSII is a light-driven water plastoquinone oxidoreductase, using light energy to abstract electrons from H(2)O, generating a proton gradient subsequently used for ATP formation. This chain is Photosystem II reaction center protein T, found in Solanum bulbocastanum (Wild potato).